The chain runs to 663 residues: MAVNEKDVGRKSRVSVVLWVFIALGTLFLCKNAFTFSSESIHGLKISSDDSDSVDIERQISLGLTPRKPVVITDLRTGNKRKLHGRFLHITDMHPDEYYVAGTSIDNVCHSGEPTKGKDRAAKFGNAMSGCDSPMLLMDMTLDWIDKNLKDQIDFVVWTGDNIRHDNDRTYPRTEDEIFRMNAEVAEKIKKIFRTPNSPDPRDFAVPVVPSIGNNDVFPHNLFSLGPTLQTREYYRLWGDFIPEEQQRMFDRDASFFTEVIPGKLAVLSFNTLYLFKANPLVDNCDSRKQPGYQLLLWLGYVLDEIRERGMKVWISGHVPPIAKNYDSSCYDKFSLWMHEYRDVIIGGLYGHMNMDHFVPVDVQAIRENMEEQQMSLLSEDERLTKTIREHAIAAREAHLMGAKPVNKESYLDGVLDTYYKGVLQEIEQAVDSDLDIEKKKKKKGKKKKGKKEKRTLEEIYDQHSIVQVSGSVIPTFNPSIRVWEYNISDITDSSSIFGENQLEYQSWDLFFEDLEHKMKNEFDDNESSFWAASAEQNKKKKKKNGKPDKSIPRKKPDELPAGPGHIQQLFSPTKFVQYFADLDSINSEYEKLIDKGLAEHDAINKAFNYEVEYTSKDEPYPMESLLVKDYLHLAADLARDNGLWKIFKERAFISTGYEDERN.

The Cytoplasmic segment spans residues 1 to 14 (MAVNEKDVGRKSRV). A helical; Signal-anchor for type II membrane protein transmembrane segment spans residues 15 to 35 (SVVLWVFIALGTLFLCKNAFT). Over 36–663 (FSSESIHGLK…ISTGYEDERN (628 aa)) the chain is Vacuolar. Asn487 and Asn526 each carry an N-linked (GlcNAc...) asparagine glycan. Residues 534 to 564 (SAEQNKKKKKKNGKPDKSIPRKKPDELPAGP) are disordered. A compositionally biased stretch (basic and acidic residues) spans 546–559 (GKPDKSIPRKKPDE).

The protein belongs to the endopolyphosphatase PPN1 family. A divalent metal cation serves as cofactor. In terms of processing, processing by proteases in the vacuole may be required for activation.

It localises to the vacuole membrane. It carries out the reaction [phosphate](n+1) + n H2O = (n+1) phosphate + n H(+). Catalyzes the hydrolysis of inorganic polyphosphate (polyP) chains of many hundreds of phosphate residues into shorter lengths. This is Endopolyphosphatase (PPN1) from Candida glabrata (strain ATCC 2001 / BCRC 20586 / JCM 3761 / NBRC 0622 / NRRL Y-65 / CBS 138) (Yeast).